The chain runs to 283 residues: ATP synthase gamma chain (283 aa).

It belongs to the ATPase gamma chain family. F-type ATPases have 2 components, CF(1) - the catalytic core - and CF(0) - the membrane proton channel. CF(1) has five subunits: alpha(3), beta(3), gamma(1), delta(1), epsilon(1). CF(0) has three main subunits: a, b and c.

It is found in the cell membrane. Functionally, produces ATP from ADP in the presence of a proton gradient across the membrane. The gamma chain is believed to be important in regulating ATPase activity and the flow of protons through the CF(0) complex. This Clostridium botulinum (strain Eklund 17B / Type B) protein is ATP synthase gamma chain.